The following is a 290-amino-acid chain: MDKIIKSIAQSGAFRAYVLDSTETVALAQEKHNTLSSSTVALGRTLIANQILAANQKGDSKITVKVIGDSSFGHIISVADTKGHVKGYIQNTGVDIKKTATGEVLVGPFMGNGHFVTIIDYGTGNPYTSTTPLITGEIGEDFAYYLTESEQTPSAIGLNVLLDENDKVKVAGGFMVQVLPEASEEEIARYEKRLQEMPAISHLLASKNHVDALLEAIYGDEPYKRLSEEPLSFQCDCSRERFEAALMTLPKADLQAMIDEDKGAEIVCQFCGTKYQFNESDLEAIINDKA.

2 cysteine pairs are disulfide-bonded: Cys235–Cys237 and Cys268–Cys271.

This sequence belongs to the HSP33 family. In terms of processing, under oxidizing conditions two disulfide bonds are formed involving the reactive cysteines. Under reducing conditions zinc is bound to the reactive cysteines and the protein is inactive.

The protein localises to the cytoplasm. Functionally, redox regulated molecular chaperone. Protects both thermally unfolding and oxidatively damaged proteins from irreversible aggregation. Plays an important role in the bacterial defense system toward oxidative stress. The protein is 33 kDa chaperonin of Streptococcus pyogenes serotype M49 (strain NZ131).